The primary structure comprises 854 residues: Alkaline phosphatase-like protein PglZ (854 aa).

This sequence belongs to the alkaline phosphatase superfamily.

Its function is as follows. BREX systems (bacteriophage exclusion) provide immunity against bacteriophage. A core protein of a type 1 BREX system. This system allows phage adsorption but prevents phage DNA replication, without degradation of the phage DNA. Methylation of bacterial DNA by PglX probably guides self/non-self discrimination. When the brxA-brxB-brxC-pglX and pglZ-brxL operons are transformed into a susceptible B.subtilis strain (BEST7003) they confer resistance to bacteriophages SPbeta, SP16, Zeta, phi3T and SP02 and partial protection to phages SP01 and SP82G (these include lytic and temperate phage). They do not protect against phages phi105, rho10 or rho14. Additionally confers a very slight reduction in efficiency of plasmid transformation. The sequence is that of Alkaline phosphatase-like protein PglZ from Bacillus cereus (strain H3081.97).